A 949-amino-acid chain; its full sequence is Glycine dehydrogenase (decarboxylating) (949 aa).

Lys-702 carries the post-translational modification N6-(pyridoxal phosphate)lysine.

The protein belongs to the GcvP family. In terms of assembly, the glycine cleavage system is composed of four proteins: P, T, L and H. The cofactor is pyridoxal 5'-phosphate.

It carries out the reaction N(6)-[(R)-lipoyl]-L-lysyl-[glycine-cleavage complex H protein] + glycine + H(+) = N(6)-[(R)-S(8)-aminomethyldihydrolipoyl]-L-lysyl-[glycine-cleavage complex H protein] + CO2. In terms of biological role, the glycine cleavage system catalyzes the degradation of glycine. The P protein binds the alpha-amino group of glycine through its pyridoxal phosphate cofactor; CO(2) is released and the remaining methylamine moiety is then transferred to the lipoamide cofactor of the H protein. The chain is Glycine dehydrogenase (decarboxylating) from Rhodococcoides fascians (Rhodococcus fascians).